The chain runs to 478 residues: Cytochrome c-552 (478 aa).

An N-terminal signal peptide occupies residues 1–26 (MTRIKINARRIFSLLIPFFFFTSVHA). Histidine 94 contributes to the heme c binding site. Cysteine 122, cysteine 125, and lysine 126 together coordinate heme. Residues cysteine 160, cysteine 163, histidine 164, cysteine 209, cysteine 212, and histidine 213 each contribute to the heme c site. Glutamate 215, tyrosine 216, lysine 261, and glutamine 263 together coordinate Ca(2+). A substrate-binding site is contributed by tyrosine 216. Histidine 264 is a substrate binding site. Residues histidine 275, cysteine 282, cysteine 285, histidine 286, histidine 301, cysteine 314, cysteine 317, histidine 318, and histidine 393 each contribute to the heme c site.

The protein belongs to the cytochrome c-552 family. Requires Ca(2+) as cofactor. The cofactor is heme c.

The protein resides in the periplasm. It carries out the reaction 6 Fe(III)-[cytochrome c] + NH4(+) + 2 H2O = 6 Fe(II)-[cytochrome c] + nitrite + 8 H(+). Its pathway is nitrogen metabolism; nitrate reduction (assimilation). Functionally, catalyzes the reduction of nitrite to ammonia, consuming six electrons in the process. The protein is Cytochrome c-552 of Escherichia coli (strain ATCC 8739 / DSM 1576 / NBRC 3972 / NCIMB 8545 / WDCM 00012 / Crooks).